An 833-amino-acid polypeptide reads, in one-letter code: Transcription factor MBP1 (833 aa).

The 107-residue stretch at 5–111 folds into the HTH APSES-type domain; sequence IYSARYSGVD…FTQTDGSASP (107 aa). The H-T-H motif DNA-binding region spans 36–57; the sequence is ATHILKAANFAKAKRTRILEKE. Disordered regions lie at residues 104–223 and 280–329; these read QTDG…QSPT and QQSS…SPII. Ser110 is subject to Phosphoserine. The segment covering 115-129 has biased composition (basic residues); that stretch reads PKHHHASKVDRKKAI. Over residues 139 to 149 the composition is skewed to basic and acidic residues; that stretch reads ETKRNNKKAEE. Over residues 201-223 the composition is skewed to polar residues; it reads PNSSISTTQLPSIRSTMGPQSPT. Positions 280–307 are enriched in low complexity; that stretch reads QQSSLIQTQQTESMATSVSSSPSLPTSP. Thr325 is modified (phosphothreonine). Phosphoserine occurs at positions 326 and 330. 2 ANK repeats span residues 394–423 and 512–541; these read ELHT…SIRS and NGDT…LTTI. Ser827 is subject to Phosphoserine.

As to quaternary structure, component of the transcription complex MCB-binding factor (MBF) composed of SWI6 and MBP1. Interacts with MSA1.

Its subcellular location is the nucleus. Binds to MCB elements (Mlu I cell cycle box) found in the promoter of most DNA synthesis genes. Transcriptional activation by MBF has an important role in the transition from G1 to S phase. It may have a dual role in that it behaves as an activator of transcription at the G1-S boundary and as a repressor during other stages of the cell cycle. The protein is Transcription factor MBP1 (MBP1) of Saccharomyces cerevisiae (strain ATCC 204508 / S288c) (Baker's yeast).